A 337-amino-acid chain; its full sequence is Fructose-1,6-bisphosphatase class 1 (337 aa).

The Mg(2+) site is built by E94, D116, L118, and D119. Substrate contacts are provided by residues 119-122 (DGSS), N210, and K276. A Mg(2+)-binding site is contributed by E282.

This sequence belongs to the FBPase class 1 family. As to quaternary structure, homotetramer. Requires Mg(2+) as cofactor.

It localises to the cytoplasm. It carries out the reaction beta-D-fructose 1,6-bisphosphate + H2O = beta-D-fructose 6-phosphate + phosphate. Its pathway is carbohydrate biosynthesis; gluconeogenesis. This chain is Fructose-1,6-bisphosphatase class 1, found in Burkholderia lata (strain ATCC 17760 / DSM 23089 / LMG 22485 / NCIMB 9086 / R18194 / 383).